A 199-amino-acid polypeptide reads, in one-letter code: Holliday junction branch migration complex subunit RuvA (199 aa).

Residues 1–63 (MIGCLIGEVF…EDAQQLYGFS (63 aa)) are domain I. The segment at 64 to 142 (DAQEKTIFRT…TLAQGTSSAA (79 aa)) is domain II. The flexible linker stretch occupies residues 143–150 (ALPQIQFV). The domain III stretch occupies residues 150–199 (VSNSPVAEAEAALQSLGYKPLEAQKAVAAVKADYTESADIIRAALKSMMK).

This sequence belongs to the RuvA family. Homotetramer. Forms an RuvA(8)-RuvB(12)-Holliday junction (HJ) complex. HJ DNA is sandwiched between 2 RuvA tetramers; dsDNA enters through RuvA and exits via RuvB. An RuvB hexamer assembles on each DNA strand where it exits the tetramer. Each RuvB hexamer is contacted by two RuvA subunits (via domain III) on 2 adjacent RuvB subunits; this complex drives branch migration. In the full resolvosome a probable DNA-RuvA(4)-RuvB(12)-RuvC(2) complex forms which resolves the HJ.

It is found in the cytoplasm. The RuvA-RuvB-RuvC complex processes Holliday junction (HJ) DNA during genetic recombination and DNA repair, while the RuvA-RuvB complex plays an important role in the rescue of blocked DNA replication forks via replication fork reversal (RFR). RuvA specifically binds to HJ cruciform DNA, conferring on it an open structure. The RuvB hexamer acts as an ATP-dependent pump, pulling dsDNA into and through the RuvAB complex. HJ branch migration allows RuvC to scan DNA until it finds its consensus sequence, where it cleaves and resolves the cruciform DNA. This chain is Holliday junction branch migration complex subunit RuvA, found in Acinetobacter baumannii (strain AB307-0294).